Here is a 707-residue protein sequence, read N- to C-terminus: Golgin candidate 1 (707 aa).

Over 1–664 (MASWLKAAED…RATRFLWRYP (664 aa)) the chain is Cytoplasmic. 3 disordered regions span residues 22–106 (VVED…EIHP), 121–196 (VADT…SKRD), and 234–256 (QEPKVPVTSTNLKREQDRRADTT). Positions 38–47 (SGRKGSQGKR) are enriched in low complexity. Residues 56–67 (VKEESSNKRDSS) show a composition bias toward basic and acidic residues. Over residues 68 to 80 (GDQSGPGVSQSEV) the composition is skewed to polar residues. The span at 83–95 (SKSSVSTDETSSS) shows a compositional bias: low complexity. 3 stretches are compositionally biased toward basic and acidic residues: residues 139 to 150 (DGDRSESKHADG), 185 to 196 (TQRELDDSSKRD), and 245 to 254 (LKREQDRRAD). 2 coiled-coil regions span residues 287 to 424 (RVCA…NATK) and 452 to 608 (ADER…KSRV). Residues 665 to 685 (IARMFLLFYLVFVHLFLMYLI) traverse the membrane as a helical; Signal-anchor for type II membrane protein segment. The Lumenal segment spans residues 686-707 (HRLQEQAEAQEVAAMTNNVFRL).

It is found in the golgi apparatus membrane. In terms of biological role, golgi matrix protein playing a role in tethering of vesicles to Golgi membranes and in maintaining the overall structure of the Golgi apparatus. The sequence is that of Golgin candidate 1 (GC1) from Arabidopsis thaliana (Mouse-ear cress).